Consider the following 734-residue polypeptide: Photosystem I P700 chlorophyll a apoprotein A2 (734 aa).

8 consecutive transmembrane segments (helical) span residues Ile-46 to Ala-69, Leu-135 to Gln-158, Leu-175 to Ile-199, Ile-273 to Tyr-291, Leu-330 to Tyr-353, Ala-369 to Ile-395, Ala-417 to His-439, and Phe-517 to Val-535. [4Fe-4S] cluster contacts are provided by Cys-559 and Cys-568. Transmembrane regions (helical) follow at residues Ala-575–Trp-596 and Leu-643–Ile-665. Chlorophyll a contacts are provided by His-654, Met-662, and Tyr-670. Trp-671 lines the phylloquinone pocket. A helical membrane pass occupies residues Leu-707 to Ala-727.

Belongs to the PsaA/PsaB family. In terms of assembly, the PsaA/B heterodimer binds the P700 chlorophyll special pair and subsequent electron acceptors. PSI consists of a core antenna complex that captures photons, and an electron transfer chain that converts photonic excitation into a charge separation. The eukaryotic PSI reaction center is composed of at least 11 subunits. P700 is a chlorophyll a/chlorophyll a' dimer, A0 is one or more chlorophyll a, A1 is one or both phylloquinones and FX is a shared 4Fe-4S iron-sulfur center. is required as a cofactor.

The protein localises to the plastid. The protein resides in the chloroplast thylakoid membrane. It carries out the reaction reduced [plastocyanin] + hnu + oxidized [2Fe-2S]-[ferredoxin] = oxidized [plastocyanin] + reduced [2Fe-2S]-[ferredoxin]. In terms of biological role, psaA and PsaB bind P700, the primary electron donor of photosystem I (PSI), as well as the electron acceptors A0, A1 and FX. PSI is a plastocyanin-ferredoxin oxidoreductase, converting photonic excitation into a charge separation, which transfers an electron from the donor P700 chlorophyll pair to the spectroscopically characterized acceptors A0, A1, FX, FA and FB in turn. Oxidized P700 is reduced on the lumenal side of the thylakoid membrane by plastocyanin. This chain is Photosystem I P700 chlorophyll a apoprotein A2, found in Phalaenopsis aphrodite subsp. formosana (Moth orchid).